We begin with the raw amino-acid sequence, 409 residues long: LL-diaminopimelate aminotransferase (409 aa).

Tyrosine 15 and glycine 42 together coordinate substrate. Residues tyrosine 72, 108-109, tyrosine 132, asparagine 186, tyrosine 217, and 245-247 each bind pyridoxal 5'-phosphate; these read AK and SFS. Substrate contacts are provided by lysine 109, tyrosine 132, and asparagine 186. Residue lysine 248 is modified to N6-(pyridoxal phosphate)lysine. Positions 256 and 291 each coordinate pyridoxal 5'-phosphate. Asparagine 291 and arginine 387 together coordinate substrate.

This sequence belongs to the class-I pyridoxal-phosphate-dependent aminotransferase family. LL-diaminopimelate aminotransferase subfamily. In terms of assembly, homodimer. The cofactor is pyridoxal 5'-phosphate.

The enzyme catalyses (2S,6S)-2,6-diaminopimelate + 2-oxoglutarate = (S)-2,3,4,5-tetrahydrodipicolinate + L-glutamate + H2O + H(+). The protein operates within amino-acid biosynthesis; L-lysine biosynthesis via DAP pathway; LL-2,6-diaminopimelate from (S)-tetrahydrodipicolinate (aminotransferase route): step 1/1. Its function is as follows. Involved in the synthesis of meso-diaminopimelate (m-DAP or DL-DAP), required for both lysine and peptidoglycan biosynthesis. Catalyzes the direct conversion of tetrahydrodipicolinate to LL-diaminopimelate. The protein is LL-diaminopimelate aminotransferase of Phocaeicola vulgatus (strain ATCC 8482 / DSM 1447 / JCM 5826 / CCUG 4940 / NBRC 14291 / NCTC 11154) (Bacteroides vulgatus).